Consider the following 394-residue polypeptide: WAT1-related protein At2g40900 (394 aa).

10 consecutive transmembrane segments (helical) span residues 13–33, 40–60, 67–87, 102–122, 142–162, 180–200, 209–229, 245–265, 273–293, and 298–318; these read FAMVCLQFGYAGMNLVTKTVL, YVLVAYRNAFATAAIAPFALL, SKMTFPIFMRIFLLALLGPVI, TFSSAVSNIVPAITIILATLF, LVTVVGSILMIFYKGPFINFF, AAVFLLLASLSWASFFVLQAA, LSMSTMVCFMGTLQSLALAFV, LLASAYAGIMSSSIAYYVQGL, VFVTAFNPLIVVIVSIMSFFV, and IYLGGVIGVVVLMVGVYAVLW. EamA domains are found at residues 22–147 and 189–317; these read YAGM…TVVG and LSWA…YAVL.

Belongs to the drug/metabolite transporter (DMT) superfamily. Plant drug/metabolite exporter (P-DME) (TC 2.A.7.4) family.

The protein resides in the membrane. The polypeptide is WAT1-related protein At2g40900 (Arabidopsis thaliana (Mouse-ear cress)).